Reading from the N-terminus, the 222-residue chain is Small ribosomal subunit protein eS1 (222 aa).

Belongs to the eukaryotic ribosomal protein eS1 family.

This chain is Small ribosomal subunit protein eS1, found in Pyrobaculum islandicum (strain DSM 4184 / JCM 9189 / GEO3).